The sequence spans 463 residues: L-2-hydroxyglutarate dehydrogenase, mitochondrial (463 aa).

The N-terminal 51 residues, 1-51 (MVPALRYLVGACGRARGLFAGGSPGACGFASGRPRPLCGGSRSASTSSFDI), are a transit peptide targeting the mitochondrion. 3 positions are modified to N6-acetyllysine: Lys104, Lys155, and Lys173.

This sequence belongs to the L2HGDH family. The cofactor is FAD. Widely expressed. Highly expressed in brain, testis and muscle. Expressed to a lower extent in lymphocytes, fibroblasts, keratinocytes, placenta, bladder, small intestine, liver and bone marrow.

The protein resides in the mitochondrion. It carries out the reaction (S)-2-hydroxyglutarate + A = 2-oxoglutarate + AH2. This Homo sapiens (Human) protein is L-2-hydroxyglutarate dehydrogenase, mitochondrial (L2HGDH).